The following is a 473-amino-acid chain: GTPase Der (473 aa).

2 EngA-type G domains span residues 3 to 167 (FKVA…KGLE) and 203 to 378 (LRVA…TFWN). GTP-binding positions include 9-16 (GRPNVGKS), 56-60 (DTAGL), 119-122 (NKCE), 209-216 (GRPNVGKS), 256-260 (DTAGM), and 321-324 (NKWD). The 85-residue stretch at 379-463 (ARVPTARLNR…PIRLFMRKTH (85 aa)) folds into the KH-like domain.

The protein belongs to the TRAFAC class TrmE-Era-EngA-EngB-Septin-like GTPase superfamily. EngA (Der) GTPase family. Associates with the 50S ribosomal subunit.

Functionally, GTPase that plays an essential role in the late steps of ribosome biogenesis. The sequence is that of GTPase Der from Parvibaculum lavamentivorans (strain DS-1 / DSM 13023 / NCIMB 13966).